Reading from the N-terminus, the 240-residue chain is Lactate utilization protein C (240 aa).

The protein belongs to the LutC/YkgG family.

In terms of biological role, is involved in L-lactate degradation and allows cells to grow with lactate as the sole carbon source. The sequence is that of Lactate utilization protein C from Geobacillus thermodenitrificans (strain NG80-2).